The primary structure comprises 775 residues: Serine/threonine-protein kinase-like protein CCR1 (775 aa).

The signal sequence occupies residues 1-23 (METRCSLLFLSLILLYLPKPGSG). Over 24 to 439 (FGSSGPIAAS…DKHWHQLQRL (416 aa)) the chain is Extracellular. 10 N-linked (GlcNAc...) asparagine glycosylation sites follow: N57, N102, N167, N213, N220, N241, N261, N292, N328, and N360. The TNFR-Cys repeat unit spans residues 351–406 (PCNEKEFAFNASILNEPDLTSLCVRKELMVCSPCGSDCSHGFFLSSSCTANSDRIC). 3 disulfides stabilise this stretch: C352–C381, C384–C398, and C388–C406. A glycan (N-linked (GlcNAc...) asparagine) is linked at N414. A helical transmembrane segment spans residues 440–460 (VLIIGSCASALLIIIIGCCVV). The Cytoplasmic segment spans residues 461–775 (PRIVTSPNKE…EHVARDALIF (315 aa)). One can recognise a Protein kinase domain in the interval 520–770 (FKEFNELGRG…LANWLEHVAR (251 aa)). Residues 526–534 (LGRGSYGFV) and K548 each bind ATP. D645 serves as the catalytic Proton acceptor.

Belongs to the protein kinase superfamily. Ser/Thr protein kinase family. As to quaternary structure, homodimer. Expressed in roots, leaves, shoot apical meristems (SAM), and floral buds.

Its subcellular location is the membrane. The enzyme catalyses L-seryl-[protein] + ATP = O-phospho-L-seryl-[protein] + ADP + H(+). The catalysed reaction is L-threonyl-[protein] + ATP = O-phospho-L-threonyl-[protein] + ADP + H(+). Functionally, serine/threonine-protein kinase with low activity. This chain is Serine/threonine-protein kinase-like protein CCR1 (CCR1), found in Arabidopsis thaliana (Mouse-ear cress).